Here is a 270-residue protein sequence, read N- to C-terminus: Bark lectin (270 aa).

The signal sequence occupies residues 1 to 15 (ISITFFLLLLNKVNS). N60, N76, and N127 each carry an N-linked (GlcNAc...) asparagine glycan. Residues E141 and D143 each contribute to the Mn(2+) site. Ca(2+) is bound by residues D143, H145, N147, and D150. The Mn(2+) site is built by D150 and H155. A glycan (N-linked (GlcNAc...) asparagine) is linked at N201.

This sequence belongs to the leguminous lectin family.

In terms of biological role, galNAc-specific lectin. This is Bark lectin from Styphnolobium japonicum (Japanese pagoda tree).